A 1404-amino-acid chain; its full sequence is Microtubule organization protein AKNA (1404 aa).

2 disordered regions span residues 1 to 304 (MASS…VSPL) and 317 to 382 (QHKQ…RPLI). Position 51 is a phosphoserine (serine 51). The span at 70–91 (WDPDMQDSEESSGEETEADDAS) shows a compositional bias: acidic residues. A compositionally biased stretch (polar residues) spans 185–203 (KSWSSGTVSLRQPSDSLGS). Residue serine 302 is modified to Phosphoserine. 2 positions are modified to phosphoserine: serine 485 and serine 520. A disordered region spans residues 494-549 (AEWWPDPAQDPQASEATGWPFPRTDLSPSSSPGVATPGRLPQSQGIATDQPSTGQT). Residues 534–549 (PQSQGIATDQPSTGQT) show a composition bias toward polar residues. A Phosphoserine modification is found at serine 617. Residues 645–659 (MDQTQRETEPCRPDL) are compositionally biased toward basic and acidic residues. Residues 645–708 (MDQTQRETEP…TSPGSSCTLP (64 aa)) are disordered. Composition is skewed to polar residues over residues 660-674 (QDST…QSAH) and 686-707 (DGQT…SCTL). 2 positions are modified to phosphoserine: serine 750 and serine 753. Residues 754-787 (LPEALRDEDEDDLEEEEEEQDHQGPLEVDSPATA) are PEST. Disordered stretches follow at residues 755 to 1038 (PEAL…STAN) and 1085 to 1185 (HSTQ…RERV). The segment covering 759–773 (RDEDEDDLEEEEEEQ) has biased composition (acidic residues). Residues 803 to 813 (TQAEESHRDAT) show a composition bias toward basic and acidic residues. Phosphoserine occurs at positions 831 and 860. Positions 885–906 (HTEEPWMVSPETDSGFVGSETS) are PEST. Polar residues-rich tracts occupy residues 903–914 (SETSIVSPFTQT), 921–933 (HVST…QHLT), and 963–974 (SRTQQHFSSLSS). Serine 971 carries the phosphoserine modification. Low complexity predominate over residues 1015–1029 (TSPDSAPAPTAASTP). The span at 1085-1098 (HSTQTQEKLGSSPS) shows a compositional bias: polar residues. The segment at residues 1088 to 1096 (QTQEKLGSS) is a DNA-binding region (a.T hook). A phosphoserine mark is found at serine 1144 and serine 1145. Basic and acidic residues predominate over residues 1155–1167 (SSEKSRTFEEHPE). The residue at position 1200 (serine 1200) is a Phosphoserine. Disordered stretches follow at residues 1208–1235 (SGTP…TTRG) and 1253–1286 (SAEA…QTGS). Over residues 1221–1235 (TQDTGSAVSRDTTRG) the composition is skewed to polar residues. Phosphoserine occurs at positions 1339, 1352, and 1389.

It belongs to the AKNA family. As to quaternary structure, interacts with DCTN1. Interacts with MAPRE1/EB1. Interacts with ODF2. Interacts with CAMSAP3. In terms of processing, phosphorylated; phosphorylation regulates dissociation from and reassembly at the centrosome. In terms of tissue distribution, expressed in neural stem cells isolated at the peak of subventricular zone (SVZ): localizes at the subdistal appendages of the mother centriole in specific subtypes of neural stem cells and in almost all basal progenitors.

Its subcellular location is the cytoplasm. The protein localises to the cytoskeleton. It localises to the microtubule organizing center. The protein resides in the centrosome. It is found in the centriole. Its subcellular location is the nucleus. Centrosomal protein that plays a key role in cell delamination by regulating microtubule organization. Required for the delamination and retention of neural stem cells from the subventricular zone during neurogenesis. Also regulates the epithelial-to-mesenchymal transition in other epithelial cells. Acts by increasing centrosomal microtubule nucleation and recruiting nucleation factors and minus-end stabilizers, thereby destabilizing microtubules at the adherens junctions and mediating constriction of the apical endfoot. In addition, may also act as a transcription factor that specifically activates the expression of the CD40 receptor and its ligand CD40L/CD154, two cell surface molecules on lymphocytes that are critical for antigen-dependent-B-cell development. Binds to A/T-rich promoters. It is unclear how it can both act as a microtubule organizer and as a transcription factor; additional evidences are required to reconcile these two apparently contradictory functions. This is Microtubule organization protein AKNA from Mus musculus (Mouse).